A 403-amino-acid chain; its full sequence is Malate dehydrogenase, chloroplastic (403 aa).

A chloroplast-targeting transit peptide spans 1–80 (MATATSASLF…DKKPYGFKIN (80 aa)). Residues 89–95 (GAAGGIG) and Asp-115 each bind NAD(+). Residues Arg-162 and Arg-168 each contribute to the substrate site. NAD(+) is bound by residues Asn-175 and 198–200 (ISN). Residues Asn-200 and Arg-234 each contribute to the substrate site. The active-site Proton acceptor is His-258. Met-309 is a binding site for NAD(+).

This sequence belongs to the LDH/MDH superfamily. MDH type 1 family. In terms of assembly, homodimer. In terms of tissue distribution, expressed in rosette leaves. Expressed in meristematic regions of roots and shoots, cotyledons, young leaves, trichomes, stamen, pollen, tapetum, gynoecium and ovules.

Its subcellular location is the plastid. It is found in the chloroplast stroma. It carries out the reaction (S)-malate + NAD(+) = oxaloacetate + NADH + H(+). Functionally, catalyzes a reversible NAD-dependent dehydrogenase reaction involved in central metabolism and redox homeostasis between organelle compartments. Plays a key role in the metabolism of dark chloroplasts and non-green plastids. Essential for embryo viability. Plays an essential role in heterotrophic metabolism in embryos, and autotrophic metabolism in photosynthetic tissues as well. The protein is Malate dehydrogenase, chloroplastic of Arabidopsis thaliana (Mouse-ear cress).